The sequence spans 59 residues: Large ribosomal subunit protein bL32 (59 aa).

Residues 1–16 show a composition bias toward basic residues; the sequence is MAVPKRKTSPSKRGMR. Positions 1–20 are disordered; that stretch reads MAVPKRKTSPSKRGMRRSHD.

This sequence belongs to the bacterial ribosomal protein bL32 family.

This chain is Large ribosomal subunit protein bL32, found in Sphingopyxis alaskensis (strain DSM 13593 / LMG 18877 / RB2256) (Sphingomonas alaskensis).